An 878-amino-acid polypeptide reads, in one-letter code: Enoyl-CoA isomerase/hydratase claC (878 aa).

The tract at residues 541–561 (VGPASTEATSPVVEPSTMESD) is disordered. Residues 677-681 (AGADL) and Gly-724 each bind substrate.

Belongs to the enoyl-CoA hydratase/isomerase family.

Its pathway is secondary metabolite biosynthesis. Functionally, enoyl-CoA isomerase/hydratase; part of the cla gene cluster that produces clavatol and ortho-quinone methide. The clavatol biosynthesis cluster cla and the terrestric acid cluster tra are both involved in the production of peniphenones and penilactones. The non-reducing PKS claF is responsible for the formation of clavatol from successive condensations of 3 malonyl-CoA units, presumably with a simple acetyl-CoA starter unit, and 2 methylation steps. The esterase claE probably collaborates with claF by catalyzing the hydrolysis of ACP-bound acyl intermediates to free the ACP from stalled intermediates. The clavatol oxidase claD then converts clavatol to hydroxyclavatol. Spontaneous dehydration of hydroxyclavatol leads to the accumulation of the highly active ortho-quinone methide. On the other hand, the PKS-NRPS hybrid traA is involved in the formation of crustosic acid, with the help of traB and traD. The polyketide synthase module (PKS) of traA is responsible for the synthesis of the polyketide backbone via the condensation of an acetyl-CoA starter unit with 3 malonyl-CoA units. The downstream nonribosomal peptide synthetase (NRPS) module then amidates the carboxyl end of the polyketide with L-malic acid. Because traA lacks a designated enoylreductase (ER) domain, the required activity is provided the enoyl reductase traG. Crustosic acid undergoes decarboxylation and isomerization to the terrestric acid, catalyzed by the 2-oxoglutarate-dependent dioxygenase traH. Both acids are further converted to the 2 gamma-butyrolactones (R)-5-methyltetronic acid and (S)-5-carboxylmethyltetronic acid, with involvement of the cytochrome P450 monooxygenase claJ. Spontaneous addition of the methide to these gamma-butyrolactones leads to peniphenone D and penilactone D, which undergo again stereospecific attacking by methide to give penilactones A and B. The function of the enoyl-CoA isomerase/hydratase claC has not been investigated yet. This chain is Enoyl-CoA isomerase/hydratase claC, found in Penicillium crustosum (Blue mold fungus).